The chain runs to 541 residues: Formimidoyltransferase-cyclodeaminase (541 aa).

The interval 1-181 (MSQLVECVPN…GATVAGARKF (181 aa)) is formiminotransferase N-subdomain. Catalysis depends on His-82, which acts as the For formimidoyltransferase activity. Residue 163–172 (GPSAFVPSWG) participates in folate binding. Residues 182-326 (LLAFNINLLS…PKERIIEYLV (145 aa)) form a formiminotransferase C-subdomain region. The segment at 327-334 (PEAGPEQS) is linker. The tract at residues 335 to 541 (LLHKPLRTFV…VLDRLEARQA (207 aa)) is cyclodeaminase/cyclohydrolase. Residue Asp-412 is the For cyclodeaminase activity of the active site. At Ser-520 the chain carries Phosphoserine.

The protein in the C-terminal section; belongs to the cyclodeaminase/cyclohydrolase family. This sequence in the N-terminal section; belongs to the formiminotransferase family. Homooctamer, including four polyglutamate binding sites. The subunits are arranged as a tetramer of dimers, and form a planar ring-shaped structure.

It localises to the cytoplasm. The protein resides in the cytosol. The protein localises to the golgi apparatus. It is found in the cytoskeleton. Its subcellular location is the microtubule organizing center. It localises to the centrosome. The protein resides in the centriole. It catalyses the reaction 5-formimidoyltetrahydrofolate + L-glutamate = N-formimidoyl-L-glutamate + (6S)-5,6,7,8-tetrahydrofolate. It carries out the reaction 5-formimidoyltetrahydrofolate + 2 H(+) = (6R)-5,10-methenyltetrahydrofolate + NH4(+). Its pathway is amino-acid degradation; L-histidine degradation into L-glutamate; L-glutamate from N-formimidoyl-L-glutamate (transferase route): step 1/1. Its function is as follows. Folate-dependent enzyme, that displays both transferase and deaminase activity. Serves to channel one-carbon units from formiminoglutamate to the folate pool. Functionally, binds and promotes bundling of vimentin filaments originating from the Golgi. This chain is Formimidoyltransferase-cyclodeaminase (FTCD), found in Sus scrofa (Pig).